The chain runs to 391 residues: Phosphoglycerate kinase (391 aa).

Residues 21–23 (DLN), arginine 36, 59–62 (HLGR), arginine 113, and arginine 146 contribute to the substrate site. ATP is bound by residues lysine 197, glutamate 319, and 345–348 (GGDT).

This sequence belongs to the phosphoglycerate kinase family. In terms of assembly, monomer.

The protein localises to the cytoplasm. The enzyme catalyses (2R)-3-phosphoglycerate + ATP = (2R)-3-phospho-glyceroyl phosphate + ADP. It participates in carbohydrate degradation; glycolysis; pyruvate from D-glyceraldehyde 3-phosphate: step 2/5. The polypeptide is Phosphoglycerate kinase (Shewanella sp. (strain MR-7)).